Consider the following 569-residue polypeptide: ABC1 family protein MCP2 (569 aa).

A mitochondrion-targeting transit peptide spans 1–18 (MMTKAFFNKLPFEVFRRY). Over 19–34 (VRTGKSIPQRSPRTRK) the chain is Mitochondrial matrix. The chain crosses the membrane as a helical span at residues 35–51 (SLLVGGTIASAVVLYNF). Residues 52–569 (NDTFHDSVKH…KFIPKTWLSS (518 aa)) lie on the Mitochondrial intermembrane side of the membrane.

Belongs to the protein kinase superfamily. ADCK protein kinase family.

It localises to the mitochondrion. Its subcellular location is the mitochondrion inner membrane. Component of MIOREX complexes, large expressome-like assemblies of ribosomes with factors involved in all the steps of post-transcriptional gene expression. Involved in mitochondrial lipid homeostasis. The chain is ABC1 family protein MCP2 from Saccharomyces cerevisiae (strain ATCC 204508 / S288c) (Baker's yeast).